A 113-amino-acid polypeptide reads, in one-letter code: Cell cycle protein GpsB (113 aa).

Residues 36–65 (IKDYETYAALVKSLRQEIADLKEELARKPQ) are a coiled coil. The disordered stretch occupies residues 61–82 (ARKPQVSSAPSPSHPDPIDVAA).

It belongs to the GpsB family. In terms of assembly, forms polymers through the coiled coil domains. Interacts with PBP1, MreC and EzrA.

It is found in the cytoplasm. Its function is as follows. Divisome component that associates with the complex late in its assembly, after the Z-ring is formed, and is dependent on DivIC and PBP2B for its recruitment to the divisome. Together with EzrA, is a key component of the system that regulates PBP1 localization during cell cycle progression. Its main role could be the removal of PBP1 from the cell pole after pole maturation is completed. Also contributes to the recruitment of PBP1 to the division complex. Not essential for septum formation. The sequence is that of Cell cycle protein GpsB from Streptococcus pneumoniae (strain Hungary19A-6).